The sequence spans 423 residues: Methanol:N,N-dimethyl-4-nitrosoaniline oxidoreductase (423 aa).

It belongs to the iron-containing alcohol dehydrogenase family. Homodecamer. The cofactor is Mg(2+). Zn(2+) is required as a cofactor. NADPH serves as cofactor.

It catalyses the reaction methanol + A = formaldehyde + AH2. In terms of biological role, catalyzes the oxidation of methanol to yield formaldehyde. While the in vivo electron acceptor is not known, N,N-dimethyl-4-nitrosoaniline (NDMA) can serve this function in vitro and is reduced to 4-(hydroxylamino)-N,N-dimethylaniline. It is also able to use ethanol and formaldehyde with an activity comparable to methanol, and has a weak activity with methylamine as substrate. The sequence is that of Methanol:N,N-dimethyl-4-nitrosoaniline oxidoreductase from Mycobacterium sp. (strain DSM 3803 / JC1).